The following is a 476-amino-acid chain: Variant surface glycoprotein MITAT 1.2 (476 aa).

Positions 1 to 26 (MPSNQEARLFLAVLVLAQVLPILVDS) are cleaved as a signal peptide. Intrachain disulfides connect C41-C171 and C149-C213. A glycan (N-linked (GlcNAc...) asparagine) is linked at N289. 2 disordered regions span residues 389-418 (QKHK…CKSP) and 435-459 (EEAK…TGSS). 2 cysteine pairs are disulfide-bonded: C407-C419 and C415-C430. The span at 435–449 (EEAKKVADETAKDGK) shows a compositional bias: basic and acidic residues. The segment covering 450–459 (TGNTNTTGSS) has biased composition (low complexity). N-linked (GlcNAc...) asparagine glycosylation occurs at N454. A lipid anchor (GPI-anchor amidated serine) is attached at S459. The propeptide at 460-476 (NSFVISKTPLWLAVLLF) is removed in mature form.

As to quaternary structure, homodimer.

It is found in the cell membrane. VSG forms a coat on the surface of the parasite. The trypanosome evades the immune response of the host by expressing a series of antigenically distinct VSGs from an estimated 1000 VSG genes. This is Variant surface glycoprotein MITAT 1.2 from Trypanosoma brucei brucei.